The primary structure comprises 187 residues: Early E3 20.6 kDa glycoprotein (187 aa).

N-linked (GlcNAc...) asparagine; by host glycosylation is found at N30, N73, N117, N134, and N135.

This sequence belongs to the adenoviridae E3_20 family.

The chain is Early E3 20.6 kDa glycoprotein from Human adenovirus B serotype 35 (HAdV-35).